The sequence spans 644 residues: Exoribonuclease 2 (644 aa).

The RNB domain occupies 189 to 516 (RQDLTALNFV…NHRLLKAAIK (328 aa)). Positions 561–643 (DTRFAAEIID…ETRSIIARPV (83 aa)) constitute an S1 motif domain.

It belongs to the RNR ribonuclease family. RNase II subfamily.

The protein localises to the cytoplasm. It catalyses the reaction Exonucleolytic cleavage in the 3'- to 5'-direction to yield nucleoside 5'-phosphates.. Functionally, involved in mRNA degradation. Hydrolyzes single-stranded polyribonucleotides processively in the 3' to 5' direction. The chain is Exoribonuclease 2 from Escherichia fergusonii (strain ATCC 35469 / DSM 13698 / CCUG 18766 / IAM 14443 / JCM 21226 / LMG 7866 / NBRC 102419 / NCTC 12128 / CDC 0568-73).